The primary structure comprises 424 residues: GTPase Obg (424 aa).

Positions 2–158 (AKFIDQVKIM…YEANIVLKIL (157 aa)) constitute an Obg domain. One can recognise an OBG-type G domain in the interval 159 to 326 (SDVGLVGLPS…LKKIIWEFLE (168 aa)). GTP-binding positions include 165–172 (GLPSCGKS), 190–194 (FTTLV), 211–214 (DLPG), 280–283 (NKSD), and 307–309 (SAL). Residues S172 and T192 each coordinate Mg(2+). Residues 344-422 (KEINYEPDFV…IYQHKFEWEE (79 aa)) enclose the OCT domain.

The protein belongs to the TRAFAC class OBG-HflX-like GTPase superfamily. OBG GTPase family. Monomer. Requires Mg(2+) as cofactor.

It localises to the cytoplasm. Functionally, an essential GTPase which binds GTP, GDP and possibly (p)ppGpp with moderate affinity, with high nucleotide exchange rates and a fairly low GTP hydrolysis rate. Plays a role in control of the cell cycle, stress response, ribosome biogenesis and in those bacteria that undergo differentiation, in morphogenesis control. The sequence is that of GTPase Obg from Mycoplasmopsis synoviae (strain 53) (Mycoplasma synoviae).